Here is a 115-residue protein sequence, read N- to C-terminus: Dolichyl-diphosphooligosaccharide--protein glycosyltransferase subunit DAD1 (115 aa).

The Cytoplasmic segment spans residues 1–31; that stretch reads MGTSTAKEAHALIASLRSAYSATPTKLKIID. A helical membrane pass occupies residues 32 to 52; that stretch reads LYVVYAILTAVVQVVYMAIVG. Residues 53 to 55 lie on the Lumenal side of the membrane; sequence SFP. The chain crosses the membrane as a helical span at residues 56–76; sequence FNAFLSGVLSCTGTAVLAVCL. At 77–94 the chain is on the cytoplasmic side; it reads RMQVNKENREFKDLPPER. The chain crosses the membrane as a helical span at residues 95–115; that stretch reads AFADFVLCNLVLHLVIMNFLG.

This sequence belongs to the DAD/OST2 family. As to quaternary structure, component of the oligosaccharyltransferase (OST) complex.

The protein resides in the endoplasmic reticulum membrane. It participates in protein modification; protein glycosylation. Subunit of the oligosaccharyl transferase (OST) complex that catalyzes the initial transfer of a defined glycan (Glc(3)Man(9)GlcNAc(2) in eukaryotes) from the lipid carrier dolichol-pyrophosphate to an asparagine residue within an Asn-X-Ser/Thr consensus motif in nascent polypeptide chains, the first step in protein N-glycosylation. N-glycosylation occurs cotranslationally and the complex associates with the Sec61 complex at the channel-forming translocon complex that mediates protein translocation across the endoplasmic reticulum (ER). All subunits are required for a maximal enzyme activity. This Picea mariana (Black spruce) protein is Dolichyl-diphosphooligosaccharide--protein glycosyltransferase subunit DAD1 (DAD1).